Consider the following 264-residue polypeptide: 3-methyl-2-oxobutanoate hydroxymethyltransferase (264 aa).

2 residues coordinate Mg(2+): D45 and D84. 3-methyl-2-oxobutanoate is bound by residues D45–S46, D84, and K112. Position 114 (E114) interacts with Mg(2+). E181 acts as the Proton acceptor in catalysis.

Belongs to the PanB family. In terms of assembly, homodecamer; pentamer of dimers. It depends on Mg(2+) as a cofactor.

Its subcellular location is the cytoplasm. The enzyme catalyses 3-methyl-2-oxobutanoate + (6R)-5,10-methylene-5,6,7,8-tetrahydrofolate + H2O = 2-dehydropantoate + (6S)-5,6,7,8-tetrahydrofolate. The protein operates within cofactor biosynthesis; (R)-pantothenate biosynthesis; (R)-pantoate from 3-methyl-2-oxobutanoate: step 1/2. Functionally, catalyzes the reversible reaction in which hydroxymethyl group from 5,10-methylenetetrahydrofolate is transferred onto alpha-ketoisovalerate to form ketopantoate. In Shewanella frigidimarina (strain NCIMB 400), this protein is 3-methyl-2-oxobutanoate hydroxymethyltransferase.